The primary structure comprises 422 residues: Protein phosphatase 1 regulatory subunit 36 (422 aa).

In terms of assembly, interacts with PPP1CA.

In terms of biological role, inhibits phosphatase activity of protein phosphatase 1 (PP1) complexes. The protein is Protein phosphatase 1 regulatory subunit 36 (PPP1R36) of Homo sapiens (Human).